Reading from the N-terminus, the 152-residue chain is MTEYKKVIAQNKKALFHYFIEERLEAGIVLKGSEVRSLRQGKASIEESHAADTGHEVFLYNCHIAEYEKANRFNHATRRPRKLLLHTKEIKKIIGRIRIKGYTLVALSMYFNKKNKVKVELGIAKGKKLHDKRESIKEKDWKRDQSRLIRQK.

It belongs to the SmpB family.

The protein localises to the cytoplasm. Its function is as follows. Required for rescue of stalled ribosomes mediated by trans-translation. Binds to transfer-messenger RNA (tmRNA), required for stable association of tmRNA with ribosomes. tmRNA and SmpB together mimic tRNA shape, replacing the anticodon stem-loop with SmpB. tmRNA is encoded by the ssrA gene; the 2 termini fold to resemble tRNA(Ala) and it encodes a 'tag peptide', a short internal open reading frame. During trans-translation Ala-aminoacylated tmRNA acts like a tRNA, entering the A-site of stalled ribosomes, displacing the stalled mRNA. The ribosome then switches to translate the ORF on the tmRNA; the nascent peptide is terminated with the 'tag peptide' encoded by the tmRNA and targeted for degradation. The ribosome is freed to recommence translation, which seems to be the essential function of trans-translation. This is SsrA-binding protein from Rickettsia rickettsii.